The primary structure comprises 429 residues: Glutamate-1-semialdehyde 2,1-aminomutase 2 (429 aa).

Residue Lys268 is modified to N6-(pyridoxal phosphate)lysine.

Belongs to the class-III pyridoxal-phosphate-dependent aminotransferase family. HemL subfamily. As to quaternary structure, homodimer. Requires pyridoxal 5'-phosphate as cofactor.

It localises to the cytoplasm. It carries out the reaction (S)-4-amino-5-oxopentanoate = 5-aminolevulinate. It participates in porphyrin-containing compound metabolism; protoporphyrin-IX biosynthesis; 5-aminolevulinate from L-glutamyl-tRNA(Glu): step 2/2. This Bacillus cereus (strain AH187) protein is Glutamate-1-semialdehyde 2,1-aminomutase 2.